We begin with the raw amino-acid sequence, 258 residues long: Axonemal dynein light intermediate polypeptide 1 (258 aa).

2 disordered regions span residues 19–60 and 207–231; these read RNTE…CVPD and VNEQKAKCEATEKRESERRQVEEKK. Residues 34 to 48 show a composition bias toward low complexity; the sequence is SPQQPGPSGSAPQLP. Residues 176–255 are a coiled coil; the sequence is MRKALQAEQG…LKAQLEGIIA (80 aa).

This sequence belongs to the inner dynein arm light chain family. In terms of assembly, interacts with CFAP45. Interacts with DYNC1H1.

Its subcellular location is the cell projection. It localises to the cilium. The protein localises to the flagellum. It is found in the dynein axonemal particle. The protein resides in the cytoplasm. Functionally, involved in sperm flagellum assembly. In Macaca fascicularis (Crab-eating macaque), this protein is Axonemal dynein light intermediate polypeptide 1 (DNALI1).